We begin with the raw amino-acid sequence, 370 residues long: Developmentally-regulated GTP-binding protein 1 homolog (370 aa).

Positions 65 to 292 (ARVGLIGFPS…LLDKIWEYLK (228 aa)) constitute an OBG-type G domain. GTP is bound by residues 71-78 (GFPSVGKS), 117-121 (DLPGI), and 250-253 (NKID). One can recognise a TGS domain in the interval 292-369 (KLIRVYTKPK…ADEDIVQIVK (78 aa)).

The protein belongs to the TRAFAC class OBG-HflX-like GTPase superfamily. OBG GTPase family.

The sequence is that of Developmentally-regulated GTP-binding protein 1 homolog (drg1) from Dictyostelium discoideum (Social amoeba).